Here is a 946-residue protein sequence, read N- to C-terminus: Protein translocase subunit SecA (946 aa).

ATP-binding positions include Q87, 105–109 (GEGKT), and D524. The segment at 905 to 926 (APASDAAQRDPKNPASWGKIGR) is disordered. Residues C930, C932, C941, and H942 each contribute to the Zn(2+) site.

The protein belongs to the SecA family. As to quaternary structure, monomer and homodimer. Part of the essential Sec protein translocation apparatus which comprises SecA, SecYEG and auxiliary proteins SecDF-YajC and YidC. The cofactor is Zn(2+).

The protein resides in the cell inner membrane. It localises to the cytoplasm. It catalyses the reaction ATP + H2O + cellular proteinSide 1 = ADP + phosphate + cellular proteinSide 2.. In terms of biological role, part of the Sec protein translocase complex. Interacts with the SecYEG preprotein conducting channel. Has a central role in coupling the hydrolysis of ATP to the transfer of proteins into and across the cell membrane, serving both as a receptor for the preprotein-SecB complex and as an ATP-driven molecular motor driving the stepwise translocation of polypeptide chains across the membrane. This is Protein translocase subunit SecA from Bradyrhizobium diazoefficiens (strain JCM 10833 / BCRC 13528 / IAM 13628 / NBRC 14792 / USDA 110).